Reading from the N-terminus, the 311-residue chain is Very-long-chain 3-oxoacyl-CoA reductase-B (311 aa).

The chain crosses the membrane as a helical span at residues 8-28 (LFWVGAVTVLWLSVSSLWSLI). An NADP(+)-binding site is contributed by 48–77 (GKWAVVTGATDGIGKAYAEELARRGFAIVL). A helical transmembrane segment spans residues 125-145 (IGVLVNNVGVSYSYPEFFLNI). Position 187 (Ser187) interacts with substrate. Catalysis depends on Tyr200, which acts as the Proton acceptor. A helical membrane pass occupies residues 269–289 (GYLPHAIMGWVTASLLPAKLL).

It belongs to the short-chain dehydrogenases/reductases (SDR) family. 17-beta-HSD 3 subfamily.

It localises to the endoplasmic reticulum membrane. The enzyme catalyses a very-long-chain (3R)-3-hydroxyacyl-CoA + NADP(+) = a very-long-chain 3-oxoacyl-CoA + NADPH + H(+). It carries out the reaction 17beta-estradiol + NAD(+) = estrone + NADH + H(+). It catalyses the reaction 17beta-estradiol + NADP(+) = estrone + NADPH + H(+). The protein operates within lipid metabolism; fatty acid biosynthesis. Its pathway is steroid biosynthesis; estrogen biosynthesis. Its function is as follows. Catalyzes the second of the four reactions of the long-chain fatty acids elongation cycle. This endoplasmic reticulum-bound enzymatic process, allows the addition of two carbons to the chain of long- and very long-chain fatty acids/VLCFAs per cycle. This enzyme has a 3-ketoacyl-CoA reductase activity, reducing 3-ketoacyl-CoA to 3-hydroxyacyl-CoA, within each cycle of fatty acid elongation. Thereby, it may participate in the production of VLCFAs of different chain lengths that are involved in multiple biological processes as precursors of membrane lipids and lipid mediators. May also catalyze the transformation of estrone (E1) into estradiol (E2) and play a role in estrogen formation. This is Very-long-chain 3-oxoacyl-CoA reductase-B (hsd17b12b) from Danio rerio (Zebrafish).